The primary structure comprises 486 residues: Ribulose bisphosphate carboxylase large chain, chromosomal (486 aa).

The substrate site is built by asparagine 126 and threonine 176. Catalysis depends on lysine 178, which acts as the Proton acceptor. Lysine 180 lines the substrate pocket. Mg(2+)-binding residues include lysine 204, aspartate 206, and glutamate 207. Lysine 204 is modified (N6-carboxylysine). Histidine 296 serves as the catalytic Proton acceptor. The substrate site is built by arginine 297, histidine 329, and serine 381.

It belongs to the RuBisCO large chain family. Type I subfamily. As to quaternary structure, heterohexadecamer of 8 large chains and 8 small chains; disulfide-linked. The disulfide link is formed within the large subunit homodimers. Mg(2+) serves as cofactor. Post-translationally, the disulfide bond which can form between Cys-278 in the large chain dimeric partners within the hexadecamer appears to be associated with oxidative stress and protein turnover.

It carries out the reaction 2 (2R)-3-phosphoglycerate + 2 H(+) = D-ribulose 1,5-bisphosphate + CO2 + H2O. The catalysed reaction is D-ribulose 1,5-bisphosphate + O2 = 2-phosphoglycolate + (2R)-3-phosphoglycerate + 2 H(+). In terms of biological role, ruBisCO catalyzes two reactions: the carboxylation of D-ribulose 1,5-bisphosphate, the primary event in carbon dioxide fixation, as well as the oxidative fragmentation of the pentose substrate. Both reactions occur simultaneously and in competition at the same active site. The sequence is that of Ribulose bisphosphate carboxylase large chain, chromosomal (cbbL1) from Cupriavidus necator (strain ATCC 17699 / DSM 428 / KCTC 22496 / NCIMB 10442 / H16 / Stanier 337) (Ralstonia eutropha).